The primary structure comprises 143 residues: Large ribosomal subunit protein uL11 (143 aa).

This sequence belongs to the universal ribosomal protein uL11 family. In terms of assembly, part of the ribosomal stalk of the 50S ribosomal subunit. Interacts with L10 and the large rRNA to form the base of the stalk. L10 forms an elongated spine to which L12 dimers bind in a sequential fashion forming a multimeric L10(L12)X complex. One or more lysine residues are methylated.

Functionally, forms part of the ribosomal stalk which helps the ribosome interact with GTP-bound translation factors. The polypeptide is Large ribosomal subunit protein uL11 (Polynucleobacter asymbioticus (strain DSM 18221 / CIP 109841 / QLW-P1DMWA-1) (Polynucleobacter necessarius subsp. asymbioticus)).